Here is a 148-residue protein sequence, read N- to C-terminus: Ubiquitin-conjugating enzyme E2 13 (148 aa).

The UBC core domain maps to 2–148 (ALPKRIIKEI…AREWTKKYAV (147 aa)). Catalysis depends on C86, which acts as the Glycyl thioester intermediate.

Belongs to the ubiquitin-conjugating enzyme family. In terms of assembly, heterodimer with spm2.

It carries out the reaction S-ubiquitinyl-[E1 ubiquitin-activating enzyme]-L-cysteine + [E2 ubiquitin-conjugating enzyme]-L-cysteine = [E1 ubiquitin-activating enzyme]-L-cysteine + S-ubiquitinyl-[E2 ubiquitin-conjugating enzyme]-L-cysteine.. Its pathway is protein modification; protein ubiquitination. Its function is as follows. Has a role in the DNA error-free postreplication repair (PRR) pathway. The ubc13/spm2 heterodimer catalyzes the synthesis of non-canonical poly-ubiquitin chains that are linked through 'Lys-63'. The sequence is that of Ubiquitin-conjugating enzyme E2 13 (ubc13) from Schizosaccharomyces pombe (strain 972 / ATCC 24843) (Fission yeast).